Consider the following 196-residue polypeptide: dITP/XTP pyrophosphatase (196 aa).

Residue 10–15 (TSNKGK) coordinates substrate. Residue aspartate 71 is the Proton acceptor of the active site. A Mg(2+)-binding site is contributed by aspartate 71. Substrate-binding positions include serine 72, 156 to 159 (FGYD), lysine 179, and 184 to 185 (HR).

Belongs to the HAM1 NTPase family. As to quaternary structure, homodimer. It depends on Mg(2+) as a cofactor.

It catalyses the reaction XTP + H2O = XMP + diphosphate + H(+). It carries out the reaction dITP + H2O = dIMP + diphosphate + H(+). The enzyme catalyses ITP + H2O = IMP + diphosphate + H(+). In terms of biological role, pyrophosphatase that catalyzes the hydrolysis of nucleoside triphosphates to their monophosphate derivatives, with a high preference for the non-canonical purine nucleotides XTP (xanthosine triphosphate), dITP (deoxyinosine triphosphate) and ITP. Seems to function as a house-cleaning enzyme that removes non-canonical purine nucleotides from the nucleotide pool, thus preventing their incorporation into DNA/RNA and avoiding chromosomal lesions. The chain is dITP/XTP pyrophosphatase from Haemophilus ducreyi (strain 35000HP / ATCC 700724).